Consider the following 129-residue polypeptide: uncharacterized protein (129 aa).

3 consecutive transmembrane segments (helical) span residues 15-35 (IFII…IFVF), 48-68 (IFSF…YYFF), and 107-127 (INIF…NLVC).

The protein localises to the membrane. This is an uncharacterized protein from Saccharomyces cerevisiae (strain ATCC 204508 / S288c) (Baker's yeast).